Consider the following 206-residue polypeptide: uncharacterized protein (206 aa).

Residues 1–17 form the signal peptide; that stretch reads MKGKILFALFLSAGVIA. A lipid anchor (N-palmitoyl cysteine) is attached at cysteine 18. Residue cysteine 18 is the site of S-diacylglycerol cysteine attachment. Positions 21-58 form a coiled coil; sequence ASQAAKQQEVKVAKAETKTKKKESKAEKFRKALAAQDK. Residues 97–201 form the Cytochrome c domain; sequence GDWRKGESLA…DIVAYLHDPE (105 aa). 3 residues coordinate heme c: cysteine 127, cysteine 130, and histidine 131.

The protein resides in the cell membrane. This is an uncharacterized protein from Aquifex aeolicus (strain VF5).